Reading from the N-terminus, the 741-residue chain is Zinc metalloproteinase nas-30 (741 aa).

2 stretches are compositionally biased toward low complexity: residues 71-85 and 97-118; these read KPAP…APAP and PAPK…DAPP. The segment at 71–122 is disordered; sequence KPAPAAAGPRSAPAPTNEDYNTDIDVPAPKAKARAAPTPRRAQADAPPVYRQ. The region spanning 324–516 is the Peptidase M12A domain; the sequence is KVITGSVYRW…VKQVNRLYCN (193 aa). 6 disulfide bridges follow: Cys364–Cys515, Cys385–Cys404, Cys519–Cys539, Cys541–Cys550, Cys562–Cys583, and Cys610–Cys630. His412 provides a ligand contact to Zn(2+). Glu413 is a catalytic residue. Residues His416 and His422 each contribute to the Zn(2+) site. The EGF-like domain occupies 539-550; sequence CKCPDGLGGKLC. One can recognise a CUB domain in the interval 550-648; that stretch reads CGRAAKGTDH…ISDQSEALIL (99 aa). Asn633 carries N-linked (GlcNAc...) asparagine glycosylation.

Zn(2+) is required as a cofactor.

Functionally, metalloprotease. The polypeptide is Zinc metalloproteinase nas-30 (Caenorhabditis elegans).